The sequence spans 603 residues: Mono(2-hydroxyethyl) terephthalate hydrolase (603 aa).

An N-terminal signal peptide occupies residues M1 to A17. A lipid anchor (N-palmitoyl cysteine) is attached at C18. C18 carries S-diacylglycerol cysteine lipidation. Residues T24–P44 are disordered. The segment covering L26–P44 has biased composition (pro residues). A disulfide bridge connects residues C51 and C92. Residue G132 coordinates 4-[(2-hydroxyethoxy)carbonyl]benzoate. 4 cysteine pairs are disulfide-bonded: C224/C529, C303/C320, C340/C348, and C577/C599. S225 functions as the Acyl-ester intermediate in the catalytic mechanism. A 4-[(2-hydroxyethoxy)carbonyl]benzoate-binding site is contributed by E226. Positions 304, 307, 309, 311, and 313 each coordinate Ca(2+). 4-[(2-hydroxyethoxy)carbonyl]benzoate contacts are provided by R411 and S416. Catalysis depends on charge relay system residues D492 and H528. H528 is a binding site for 4-[(2-hydroxyethoxy)carbonyl]benzoate.

This sequence belongs to the tannase family.

The protein localises to the cell outer membrane. The enzyme catalyses 4-[(2-hydroxyethoxy)carbonyl]benzoate + H2O = terephthalate + ethylene glycol + H(+). Involved in the degradation and assimilation of the plastic poly(ethylene terephthalate) (PET), which allows I.sakaiensis to use PET as its major energy and carbon source for growth. Likely acts synergistically with PETase to depolymerize PET. Catalyzes the hydrolysis of mono(2-hydroxyethyl) terephthalate (MHET) into its two environmentally benign monomers, terephthalate and ethylene glycol. Does not show activity against PET, bis(hydroxyethyl) terephthalate (BHET), pNP-aliphatic esters or typical aromatic ester compounds catalyzed by the tannase family enzymes, such as ethyl gallate and ethyl ferulate. The sequence is that of Mono(2-hydroxyethyl) terephthalate hydrolase from Piscinibacter sakaiensis (Ideonella sakaiensis).